We begin with the raw amino-acid sequence, 263 residues long: Uroporphyrinogen-III C-methyltransferase (263 aa).

S-adenosyl-L-homocysteine is bound by residues Pro-20, 96-98, 126-127, Met-180, and Ala-237; these read GGD and TA.

The protein belongs to the precorrin methyltransferase family.

The enzyme catalyses uroporphyrinogen III + 2 S-adenosyl-L-methionine = precorrin-2 + 2 S-adenosyl-L-homocysteine + H(+). It functions in the pathway cofactor biosynthesis; adenosylcobalamin biosynthesis; precorrin-2 from uroporphyrinogen III: step 1/1. The protein operates within porphyrin-containing compound metabolism; siroheme biosynthesis; precorrin-2 from uroporphyrinogen III: step 1/1. Catalyzes the two successive C-2 and C-7 methylation reactions involved in the conversion of uroporphyrinogen III to precorrin-2 via the intermediate formation of precorrin-1. It is a step in the biosynthesis of both cobalamin (vitamin B12) and siroheme. The chain is Uroporphyrinogen-III C-methyltransferase (cobA) from Synechocystis sp. (strain ATCC 27184 / PCC 6803 / Kazusa).